The chain runs to 238 residues: Probable transcriptional regulatory protein YeeN (238 aa).

It belongs to the TACO1 family. YeeN subfamily.

The protein resides in the cytoplasm. This is Probable transcriptional regulatory protein YeeN from Escherichia coli (strain UTI89 / UPEC).